Consider the following 201-residue polypeptide: Holliday junction branch migration complex subunit RuvA (201 aa).

Residues 1-64 (MYEYIRGQFQ…EDFIGLYGFT (64 aa)) form a domain I region. The segment at 65–143 (TKEELEMFKL…PDELTSEEEQ (79 aa)) is domain II. A flexible linker region spans residues 144-152 (LIEGINDNS). Residues 153 to 201 (DYSFNINETLSALMALGYTEKEAQKALEKVDKTLSIENMIKESLKLLMR) form a domain III region.

This sequence belongs to the RuvA family. In terms of assembly, homotetramer. Forms an RuvA(8)-RuvB(12)-Holliday junction (HJ) complex. HJ DNA is sandwiched between 2 RuvA tetramers; dsDNA enters through RuvA and exits via RuvB. An RuvB hexamer assembles on each DNA strand where it exits the tetramer. Each RuvB hexamer is contacted by two RuvA subunits (via domain III) on 2 adjacent RuvB subunits; this complex drives branch migration. In the full resolvosome a probable DNA-RuvA(4)-RuvB(12)-RuvC(2) complex forms which resolves the HJ.

Its subcellular location is the cytoplasm. Functionally, the RuvA-RuvB-RuvC complex processes Holliday junction (HJ) DNA during genetic recombination and DNA repair, while the RuvA-RuvB complex plays an important role in the rescue of blocked DNA replication forks via replication fork reversal (RFR). RuvA specifically binds to HJ cruciform DNA, conferring on it an open structure. The RuvB hexamer acts as an ATP-dependent pump, pulling dsDNA into and through the RuvAB complex. HJ branch migration allows RuvC to scan DNA until it finds its consensus sequence, where it cleaves and resolves the cruciform DNA. The chain is Holliday junction branch migration complex subunit RuvA from Clostridium perfringens (strain SM101 / Type A).